We begin with the raw amino-acid sequence, 130 residues long: Protein ApaG (130 aa).

Positions 3–127 constitute an ApaG domain; the sequence is RALTKDIEVV…FSLDSPGLLR (125 aa).

The chain is Protein ApaG from Rhizobium leguminosarum bv. trifolii (strain WSM2304).